The following is a 440-amino-acid chain: Light-independent protochlorophyllide reductase subunit N (440 aa).

[4Fe-4S] cluster is bound by residues cysteine 15, cysteine 40, and cysteine 99.

It belongs to the BchN/ChlN family. In terms of assembly, protochlorophyllide reductase is composed of three subunits; BchL, BchN and BchB. Forms a heterotetramer of two BchB and two BchN subunits. The cofactor is [4Fe-4S] cluster.

The enzyme catalyses chlorophyllide a + oxidized 2[4Fe-4S]-[ferredoxin] + 2 ADP + 2 phosphate = protochlorophyllide a + reduced 2[4Fe-4S]-[ferredoxin] + 2 ATP + 2 H2O. It participates in porphyrin-containing compound metabolism; bacteriochlorophyll biosynthesis (light-independent). Its function is as follows. Component of the dark-operative protochlorophyllide reductase (DPOR) that uses Mg-ATP and reduced ferredoxin to reduce ring D of protochlorophyllide (Pchlide) to form chlorophyllide a (Chlide). This reaction is light-independent. The NB-protein (BchN-BchB) is the catalytic component of the complex. This chain is Light-independent protochlorophyllide reductase subunit N, found in Heliobacterium mobile (Heliobacillus mobilis).